Here is a 284-residue protein sequence, read N- to C-terminus: D-tagatose-1,6-bisphosphate aldolase subunit GatY (284 aa).

Residue Asp-82 is the Proton donor of the active site. Zn(2+)-binding residues include His-83 and His-180. Gly-181 serves as a coordination point for dihydroxyacetone phosphate. A Zn(2+)-binding site is contributed by His-208. Dihydroxyacetone phosphate contacts are provided by residues Gly-209–Ser-211 and Asn-230–Thr-233.

The protein belongs to the class II fructose-bisphosphate aldolase family. TagBP aldolase GatY subfamily. Forms a complex with GatZ. Requires Zn(2+) as cofactor.

The catalysed reaction is D-tagatofuranose 1,6-bisphosphate = D-glyceraldehyde 3-phosphate + dihydroxyacetone phosphate. It functions in the pathway carbohydrate metabolism; D-tagatose 6-phosphate degradation; D-glyceraldehyde 3-phosphate and glycerone phosphate from D-tagatose 6-phosphate: step 2/2. Functionally, catalytic subunit of the tagatose-1,6-bisphosphate aldolase GatYZ, which catalyzes the reversible aldol condensation of dihydroxyacetone phosphate (DHAP or glycerone-phosphate) with glyceraldehyde 3-phosphate (G3P) to produce tagatose 1,6-bisphosphate (TBP). Requires GatZ subunit for full activity and stability. Is involved in the catabolism of galactitol. The chain is D-tagatose-1,6-bisphosphate aldolase subunit GatY from Escherichia coli (strain 55989 / EAEC).